The primary structure comprises 246 residues: 3-deoxy-manno-octulosonate cytidylyltransferase (246 aa).

Belongs to the KdsB family.

Its subcellular location is the cytoplasm. It carries out the reaction 3-deoxy-alpha-D-manno-oct-2-ulosonate + CTP = CMP-3-deoxy-beta-D-manno-octulosonate + diphosphate. It participates in nucleotide-sugar biosynthesis; CMP-3-deoxy-D-manno-octulosonate biosynthesis; CMP-3-deoxy-D-manno-octulosonate from 3-deoxy-D-manno-octulosonate and CTP: step 1/1. The protein operates within bacterial outer membrane biogenesis; lipopolysaccharide biosynthesis. Activates KDO (a required 8-carbon sugar) for incorporation into bacterial lipopolysaccharide in Gram-negative bacteria. This is 3-deoxy-manno-octulosonate cytidylyltransferase from Bradyrhizobium diazoefficiens (strain JCM 10833 / BCRC 13528 / IAM 13628 / NBRC 14792 / USDA 110).